The primary structure comprises 408 residues: Tryptophan synthase beta chain (408 aa).

Lys-97 bears the N6-(pyridoxal phosphate)lysine mark.

It belongs to the TrpB family. Tetramer of two alpha and two beta chains. It depends on pyridoxal 5'-phosphate as a cofactor.

The catalysed reaction is (1S,2R)-1-C-(indol-3-yl)glycerol 3-phosphate + L-serine = D-glyceraldehyde 3-phosphate + L-tryptophan + H2O. It participates in amino-acid biosynthesis; L-tryptophan biosynthesis; L-tryptophan from chorismate: step 5/5. Its function is as follows. The beta subunit is responsible for the synthesis of L-tryptophan from indole and L-serine. The protein is Tryptophan synthase beta chain (trpB) of Pseudomonas syringae pv. syringae.